The following is a 70-amino-acid chain: Large ribosomal subunit protein bL31 (70 aa).

Zn(2+)-binding residues include cysteine 16, cysteine 18, cysteine 37, and cysteine 40.

This sequence belongs to the bacterial ribosomal protein bL31 family. Type A subfamily. Part of the 50S ribosomal subunit. Zn(2+) serves as cofactor.

In terms of biological role, binds the 23S rRNA. The polypeptide is Large ribosomal subunit protein bL31 (Colwellia psychrerythraea (strain 34H / ATCC BAA-681) (Vibrio psychroerythus)).